The primary structure comprises 110 residues: Large ribosomal subunit protein uL22 (110 aa).

This sequence belongs to the universal ribosomal protein uL22 family. As to quaternary structure, part of the 50S ribosomal subunit.

Its function is as follows. This protein binds specifically to 23S rRNA; its binding is stimulated by other ribosomal proteins, e.g. L4, L17, and L20. It is important during the early stages of 50S assembly. It makes multiple contacts with different domains of the 23S rRNA in the assembled 50S subunit and ribosome. In terms of biological role, the globular domain of the protein is located near the polypeptide exit tunnel on the outside of the subunit, while an extended beta-hairpin is found that lines the wall of the exit tunnel in the center of the 70S ribosome. This is Large ribosomal subunit protein uL22 from Klebsiella pneumoniae (strain 342).